Reading from the N-terminus, the 519-residue chain is Protein nucleotidyltransferase YdiU (519 aa).

Positions 101, 103, 104, 123, 135, 136, 193, and 200 each coordinate ATP. The active-site Proton acceptor is Asp-271. Residues Asn-272 and Asp-281 each coordinate Mg(2+). Residue Asp-281 coordinates ATP.

The protein belongs to the SELO family. The cofactor is Mg(2+). It depends on Mn(2+) as a cofactor.

The catalysed reaction is L-seryl-[protein] + ATP = 3-O-(5'-adenylyl)-L-seryl-[protein] + diphosphate. It carries out the reaction L-threonyl-[protein] + ATP = 3-O-(5'-adenylyl)-L-threonyl-[protein] + diphosphate. It catalyses the reaction L-tyrosyl-[protein] + ATP = O-(5'-adenylyl)-L-tyrosyl-[protein] + diphosphate. The enzyme catalyses L-histidyl-[protein] + UTP = N(tele)-(5'-uridylyl)-L-histidyl-[protein] + diphosphate. The catalysed reaction is L-seryl-[protein] + UTP = O-(5'-uridylyl)-L-seryl-[protein] + diphosphate. It carries out the reaction L-tyrosyl-[protein] + UTP = O-(5'-uridylyl)-L-tyrosyl-[protein] + diphosphate. Functionally, nucleotidyltransferase involved in the post-translational modification of proteins. It can catalyze the addition of adenosine monophosphate (AMP) or uridine monophosphate (UMP) to a protein, resulting in modifications known as AMPylation and UMPylation. The chain is Protein nucleotidyltransferase YdiU from Tolumonas auensis (strain DSM 9187 / NBRC 110442 / TA 4).